Here is a 154-residue protein sequence, read N- to C-terminus: MHCPFCGNDETKVLESRQVEEGTAVRRRRECERCARRFTTFEKFEDTPLIVVKKDGRREEFSRGKLKAGILRACEKRPVSIEQIETLVYEIEKGLRNGSEREVQSKAIGEAVMNALVHLDEVAYIRFASVYREFKDVQRFLEELHELVEKKSSR.

Residues 3-34 fold into a zinc finger; the sequence is CPFCGNDETKVLESRQVEEGTAVRRRRECERC. Residues 49–139 enclose the ATP-cone domain; that stretch reads LIVVKKDGRR…VYREFKDVQR (91 aa).

It belongs to the NrdR family. The cofactor is Zn(2+).

Functionally, negatively regulates transcription of bacterial ribonucleotide reductase nrd genes and operons by binding to NrdR-boxes. In Desulfitobacterium hafniense (strain DSM 10664 / DCB-2), this protein is Transcriptional repressor NrdR.